Here is a 302-residue protein sequence, read N- to C-terminus: Tritrans,polycis-undecaprenyl-diphosphate synthase (geranylgeranyl-diphosphate specific) (302 aa).

Residue Asp-33 is part of the active site. Asp-33 is a Mg(2+) binding site. Substrate is bound by residues 34 to 37 and 78 to 80; these read GNRR and STE. The Proton acceptor role is filled by Asn-81. Substrate contacts are provided by residues Phe-82, Arg-84, Arg-203, and 209–211; that span reads RTS.

It belongs to the UPP synthase family. As to quaternary structure, homodimer. The cofactor is Mg(2+).

The catalysed reaction is geranylgeranyl diphosphate + 7 isopentenyl diphosphate = tri-trans,hepta-cis-undecaprenyl diphosphate + 7 diphosphate. In terms of biological role, catalyzes the sequential condensation of isopentenyl diphosphate (IPP) with geranylgeranyl diphosphate (GGPP) to yield (2Z,6Z,10Z,14Z,18Z,22Z,26Z,30E,34E,38E)-undecaprenyl diphosphate (tritrans,heptacis-UPP). It is probably the precursor of glycosyl carrier lipids. In Halobacterium salinarum (strain ATCC 700922 / JCM 11081 / NRC-1) (Halobacterium halobium), this protein is Tritrans,polycis-undecaprenyl-diphosphate synthase (geranylgeranyl-diphosphate specific).